Reading from the N-terminus, the 368-residue chain is tRNA-specific 2-thiouridylase MnmA (368 aa).

Residues 14–21 and Leu-40 contribute to the ATP site; that span reads AMSGGVDS. Catalysis depends on Cys-108, which acts as the Nucleophile. A disulfide bridge connects residues Cys-108 and Cys-204. Gly-132 contacts ATP. The tract at residues 154-156 is interaction with tRNA; sequence KDQ. The Cysteine persulfide intermediate role is filled by Cys-204.

Belongs to the MnmA/TRMU family.

It is found in the cytoplasm. The catalysed reaction is S-sulfanyl-L-cysteinyl-[protein] + uridine(34) in tRNA + AH2 + ATP = 2-thiouridine(34) in tRNA + L-cysteinyl-[protein] + A + AMP + diphosphate + H(+). Functionally, catalyzes the 2-thiolation of uridine at the wobble position (U34) of tRNA, leading to the formation of s(2)U34. This Rickettsia canadensis (strain McKiel) protein is tRNA-specific 2-thiouridylase MnmA.